Here is a 206-residue protein sequence, read N- to C-terminus: MKTYSLLLGLFISFGVLAHPHAFIDIQTTPIIENNQLTGFSMKWTLDEPSSSAVIYDMKQARTKAEKQKLLDDVMGNIVSEHYFSYLYDAQNNKIKYSPRPKNYGINVQGLQLQYYFDVPLAHPQKLEKNTFSLQTYDPTYYVAMTYASKSAVDFSALSKNCQGKLIEPNVDEKIQAYASSLDKSQKNEDDSLGVMFAQKIIIQCE.

The first 18 residues, 1–18, serve as a signal peptide directing secretion; sequence MKTYSLLLGLFISFGVLA.

This is an uncharacterized protein from Haemophilus influenzae (strain ATCC 51907 / DSM 11121 / KW20 / Rd).